The chain runs to 198 residues: Penicillin-binding protein activator LpoB (198 aa).

The first 20 residues, 1-20 (MSWIRIRRSGVLLLALVLSG), serve as a signal peptide directing secretion. Cysteine 21 carries N-palmitoyl cysteine lipidation. The S-diacylglycerol cysteine moiety is linked to residue cysteine 21. The disordered stretch occupies residues 28–62 (PQPAAPVEPVTPPVNVPQPPKAEPGQNVPPPPKMQ). Over residues 30-61 (PAAPVEPVTPPVNVPQPPKAEPGQNVPPPPKM) the composition is skewed to pro residues.

This sequence belongs to the LpoB family. In terms of assembly, interacts with PBP1b.

The protein localises to the cell outer membrane. Its function is as follows. Regulator of peptidoglycan synthesis that is essential for the function of penicillin-binding protein 1B (PBP1b). This chain is Penicillin-binding protein activator LpoB, found in Erwinia amylovora (strain CFBP1430).